The chain runs to 109 residues: uncharacterized protein (109 aa).

Residues 77–98 (TRTGHAYPRFTRPSFPSCNRNG) are disordered.

This is an uncharacterized protein from Homo sapiens (Human).